Reading from the N-terminus, the 505-residue chain is Protein nucleotidyltransferase YdiU (505 aa).

Gly102, Gly104, Arg105, Lys125, Asp137, Gly138, Arg188, and Arg195 together coordinate ATP. Asp264 (proton acceptor) is an active-site residue. Mg(2+) is bound by residues Asn265 and Asp274. Asp274 lines the ATP pocket.

This sequence belongs to the SELO family. Mg(2+) is required as a cofactor. The cofactor is Mn(2+).

It catalyses the reaction L-seryl-[protein] + ATP = 3-O-(5'-adenylyl)-L-seryl-[protein] + diphosphate. It carries out the reaction L-threonyl-[protein] + ATP = 3-O-(5'-adenylyl)-L-threonyl-[protein] + diphosphate. The catalysed reaction is L-tyrosyl-[protein] + ATP = O-(5'-adenylyl)-L-tyrosyl-[protein] + diphosphate. The enzyme catalyses L-histidyl-[protein] + UTP = N(tele)-(5'-uridylyl)-L-histidyl-[protein] + diphosphate. It catalyses the reaction L-seryl-[protein] + UTP = O-(5'-uridylyl)-L-seryl-[protein] + diphosphate. It carries out the reaction L-tyrosyl-[protein] + UTP = O-(5'-uridylyl)-L-tyrosyl-[protein] + diphosphate. Nucleotidyltransferase involved in the post-translational modification of proteins. It can catalyze the addition of adenosine monophosphate (AMP) or uridine monophosphate (UMP) to a protein, resulting in modifications known as AMPylation and UMPylation. This Nitrobacter winogradskyi (strain ATCC 25391 / DSM 10237 / CIP 104748 / NCIMB 11846 / Nb-255) protein is Protein nucleotidyltransferase YdiU.